A 498-amino-acid chain; its full sequence is Protein adenylyltransferase Fic (498 aa).

Residues 43–63 (FAFLAFLAGSFLAFSLHALIS) traverse the membrane as a helical segment. 2 TPR repeats span residues 126 to 159 (ALSS…APRH) and 160 to 194 (PEVL…NPSH). An Inhibitory (S/T)XXXE(G/N) motif motif is present at residues 251 to 256 (SVGIEG). ATP contacts are provided by residues Glu-255 and 336–339 (VGGH). Residues 305–440 (ITIKDILELH…IRPFVRFIAD (136 aa)) form the Fido domain. His-383 is a catalytic residue. ATP is bound by residues 387 to 394 (DGNGRTSR), 419 to 420 (YY), and Asn-427.

Belongs to the fic family. In terms of assembly, homodimer.

Its subcellular location is the membrane. The catalysed reaction is L-tyrosyl-[protein] + ATP = O-(5'-adenylyl)-L-tyrosyl-[protein] + diphosphate. It carries out the reaction L-threonyl-[protein] + ATP = 3-O-(5'-adenylyl)-L-threonyl-[protein] + diphosphate. It catalyses the reaction 3-O-(5'-adenylyl)-L-threonyl-[protein] + H2O = L-threonyl-[protein] + AMP + H(+). With respect to regulation, the side chain of Glu-255 determines which of the two opposing activities (AMPylase or de-AMPylase) will take place. In response to endoplasmic reticulum stress, mediates de-AMPylase activity. Adenylyltransferase activity is inhibited by the inhibitory helix present at the N-terminus: Glu-255 binds ATP and competes with ATP-binding at Arg-394, thereby preventing adenylyltransferase activity. In unstressed cells, disengagement of Glu-255 promotes adenylyltransferase activity. Activation dissociates ATP-binding from Glu-255, allowing ordered binding of the entire ATP moiety with the alpha-phosphate in an orientation that is productive for accepting an incoming target hydroxyl side chain. Protein that can both mediate the addition of adenosine 5'-monophosphate (AMP) to specific residues of target proteins (AMPylation), and the removal of the same modification from target proteins (de-AMPylation), depending on the context. The side chain of Glu-255 determines which of the two opposing activities (AMPylase or de-AMPylase) will take place. Acts as a key regulator of the unfolded protein response (UPR) by mediating AMPylation or de-AMPylation of Hsc70-3/BiP. In unstressed cells, acts as an adenylyltransferase by mediating AMPylation of Hsc70-3/BiP at 'Thr-518', thereby inactivating it. In response to endoplasmic reticulum stress, acts as a phosphodiesterase by mediating removal of ATP (de-AMPylation) from Hsc70-3/BiP at 'Thr-518', leading to restore HSPA5/BiP activity. This is Protein adenylyltransferase Fic from Drosophila willistoni (Fruit fly).